The sequence spans 131 residues: Small ribosomal subunit protein bS6 (131 aa).

The segment at serine 100–glutamate 131 is disordered. Residues lysine 104–serine 115 show a composition bias toward basic and acidic residues. The span at alanine 119 to glutamate 131 shows a compositional bias: acidic residues.

The protein belongs to the bacterial ribosomal protein bS6 family.

Binds together with bS18 to 16S ribosomal RNA. The chain is Small ribosomal subunit protein bS6 from Photorhabdus laumondii subsp. laumondii (strain DSM 15139 / CIP 105565 / TT01) (Photorhabdus luminescens subsp. laumondii).